The following is a 283-amino-acid chain: Foldase protein PrsA 3 (283 aa).

Residues 1–21 form the signal peptide; that stretch reads MKKKKLFLGTIISCVVLALSA. Cys22 carries the N-palmitoyl cysteine lipid modification. Residue Cys22 is the site of S-diacylglycerol cysteine attachment. The PpiC domain maps to 132-222; that stretch reads KPEMKVSHIL…YGYHIIKVTD (91 aa).

This sequence belongs to the PrsA family.

The protein localises to the cell membrane. The catalysed reaction is [protein]-peptidylproline (omega=180) = [protein]-peptidylproline (omega=0). Plays a major role in protein secretion by helping the post-translocational extracellular folding of several secreted proteins. Important for the secretion of the protective antigen. The three PsrA proteins in this organism show different but overlapping substrate specificities. In Bacillus anthracis, this protein is Foldase protein PrsA 3 (prsA3).